Here is a 169-residue protein sequence, read N- to C-terminus: Peptide methionine sulfoxide reductase MsrA (169 aa).

The active site involves cysteine 10.

This sequence belongs to the MsrA Met sulfoxide reductase family.

It carries out the reaction L-methionyl-[protein] + [thioredoxin]-disulfide + H2O = L-methionyl-(S)-S-oxide-[protein] + [thioredoxin]-dithiol. The enzyme catalyses [thioredoxin]-disulfide + L-methionine + H2O = L-methionine (S)-S-oxide + [thioredoxin]-dithiol. Its function is as follows. Has an important function as a repair enzyme for proteins that have been inactivated by oxidation. Catalyzes the reversible oxidation-reduction of methionine sulfoxide in proteins to methionine. The polypeptide is Peptide methionine sulfoxide reductase MsrA (Streptococcus mutans serotype c (strain ATCC 700610 / UA159)).